The primary structure comprises 388 residues: MEQPSRLCSPPASGSLTSSQTNHSTFPNPNCSAPDLEPYQDSIALPWKVLLATFLGLITLGTTLSNAFVIATVSRTRKLHTPANYLIASLAVTDLLVSILVMPISTMYTVTGRWTLGQVVCDFWLSSDITCCTASILHLCVIALDRYWAITDAVEYSAKRTPKRAAGMIIMVWVFSVSISMPPLFWRQAKAEEVADCSVNTDHILYTVYSTVGAFYFPTLLLIALYGRIYVEARSRILKQTPNRTGKRLTRAQLITDSPGSSSSGTSINSRAPEGPSESGSPVYVNQVKVKVSDALLEKKKLMAARERKATRTLGIILGAFIVCWLPFFIISLALPICDDACWFHLAIFDFFNWLGYLNSLINPIIYTKSNDDFKQAFQKLMRFRRTS.

The tract at residues 1 to 29 (MEQPSRLCSPPASGSLTSSQTNHSTFPNP) is disordered. Over 1 to 45 (MEQPSRLCSPPASGSLTSSQTNHSTFPNPNCSAPDLEPYQDSIAL) the chain is Extracellular. The segment covering 12–29 (ASGSLTSSQTNHSTFPNP) has biased composition (polar residues). N-linked (GlcNAc...) asparagine glycans are attached at residues Asn22 and Asn30. Residues 46–71 (PWKVLLATFLGLITLGTTLSNAFVIA) form a helical membrane-spanning segment. Residues 72-85 (TVSRTRKLHTPANY) are Cytoplasmic-facing. The chain crosses the membrane as a helical span at residues 86-110 (LIASLAVTDLLVSILVMPISTMYTV). At 111 to 118 (TGRWTLGQ) the chain is on the extracellular side. Residues 119 to 144 (VVCDFWLSSDITCCTASILHLCVIAL) form a helical membrane-spanning segment. A disulfide bridge links Cys121 with Cys197. Asp128 and Thr133 together coordinate ergotamine. Residues 145 to 147 (DRY) carry the DRY motif; important for ligand-induced conformation changes and signaling motif. Residues 145–164 (DRYWAITDAVEYSAKRTPKR) are Cytoplasmic-facing. The helical transmembrane segment at 165-183 (AAGMIIMVWVFSVSISMPP) threads the bilayer. Over 184-203 (LFWRQAKAEEVADCSVNTDH) the chain is Extracellular. Residue Val199 participates in ergotamine binding. A helical membrane pass occupies residues 204 to 227 (ILYTVYSTVGAFYFPTLLLIALYG). Topologically, residues 228–313 (RIYVEARSRI…AARERKATRT (86 aa)) are cytoplasmic. The segment at 249-282 (LTRAQLITDSPGSSSSGTSINSRAPEGPSESGSP) is disordered. The segment covering 255-270 (ITDSPGSSSSGTSINS) has biased composition (low complexity). A helical membrane pass occupies residues 314–335 (LGIILGAFIVCWLPFFIISLAL). Over 336 to 345 (PICDDACWFH) the chain is Extracellular. The chain crosses the membrane as a helical span at residues 346–368 (LAIFDFFNWLGYLNSLINPIIYT). The short motif at 363–367 (NPIIY) is the NPxxY motif; important for ligand-induced conformation changes and signaling element. Residues 369-388 (KSNDDFKQAFQKLMRFRRTS) are Cytoplasmic-facing.

It belongs to the G-protein coupled receptor 1 family. In terms of assembly, homodimer. Heterodimer with HTR1D. In terms of processing, phosphorylated. Desensitization of the receptor may be mediated by its phosphorylation. Palmitoylated.

The protein localises to the cell membrane. In terms of biological role, G-protein coupled receptor for 5-hydroxytryptamine (serotonin). Also functions as a receptor for ergot alkaloid derivatives, various anxiolytic and antidepressant drugs and other psychoactive substances, such as lysergic acid diethylamide (LSD). Ligand binding causes a conformation change that triggers signaling via guanine nucleotide-binding proteins (G proteins) and modulates the activity of downstream effectors, such as adenylate cyclase. HTR1B is coupled to G(i)/G(o) G alpha proteins and mediates inhibitory neurotransmission by inhibiting adenylate cyclase activity. Arrestin family members inhibit signaling via G proteins and mediate activation of alternative signaling pathways. Regulates the release of 5-hydroxytryptamine, dopamine and acetylcholine in the brain, and thereby affects neural activity, nociceptive processing, pain perception, mood and behavior. Besides, plays a role in vasoconstriction of cerebral arteries. The sequence is that of 5-hydroxytryptamine receptor 1B (HTR1B) from Didelphis virginiana (North American opossum).